A 239-amino-acid polypeptide reads, in one-letter code: Probable transcriptional regulatory protein BCG9842_B4761 (239 aa).

The protein belongs to the TACO1 family. YeeN subfamily.

The protein resides in the cytoplasm. This chain is Probable transcriptional regulatory protein BCG9842_B4761, found in Bacillus cereus (strain G9842).